A 282-amino-acid polypeptide reads, in one-letter code: MPYPRKRFGQHWLKDPAVHEAILRAAQLNDLERGADPTWVLEIGPGTGQLTRRLLAQGVQVVAVEIDRDLCRLLRKRFADQPRFHLVEGDFLRLPLPPQPRLLVANIPYNLTGSILEKVLGSPAQPVRQFERIVLLVQKELAERLQAGPGSKAYGALSLRTQYLADCELICRVPPTAFKPAPKVESAVIRLTPRPAPTPVRDPCWFNHLLRQGFSTRRKKLVNALGSLVEREVVAAALAQLRLNPDARAEELDLPHWLALSDLLLEKAPKRAVVPQEEQEPG.

S-adenosyl-L-methionine contacts are provided by His-11, Leu-13, Gly-44, Glu-65, Asp-90, and Asn-106.

The protein belongs to the class I-like SAM-binding methyltransferase superfamily. rRNA adenine N(6)-methyltransferase family. RsmA subfamily.

The protein resides in the cytoplasm. The catalysed reaction is adenosine(1518)/adenosine(1519) in 16S rRNA + 4 S-adenosyl-L-methionine = N(6)-dimethyladenosine(1518)/N(6)-dimethyladenosine(1519) in 16S rRNA + 4 S-adenosyl-L-homocysteine + 4 H(+). Functionally, specifically dimethylates two adjacent adenosines (A1518 and A1519) in the loop of a conserved hairpin near the 3'-end of 16S rRNA in the 30S particle. May play a critical role in biogenesis of 30S subunits. In Synechococcus sp. (strain JA-2-3B'a(2-13)) (Cyanobacteria bacterium Yellowstone B-Prime), this protein is Ribosomal RNA small subunit methyltransferase A.